Here is an 84-residue protein sequence, read N- to C-terminus: Dolichol phosphate-mannose biosynthesis regulatory protein (84 aa).

The next 2 helical transmembrane spans lie at 11 to 31 (FGLVAVSLIIFTYYTTWVILL) and 49 to 69 (YAVLIPLATGLLLLLFVGLFI).

The protein belongs to the DPM2 family. In terms of assembly, component of the dolichol-phosphate mannose (DPM) synthase complex composed of DPM1, DPM2 and DPM3; in the complex interacts directly with DPM3. Component of the glycosylphosphatidylinositol-N-acetylglucosaminyltransferase (GPI-GnT) complex composed at least by PIGA, PIGC, PIGH, PIGP, PIGQ, PIGY and DPM2. Interacts with PIGA, PIGC and PIGQ.

The protein localises to the endoplasmic reticulum membrane. The protein operates within protein modification; protein glycosylation. In terms of biological role, regulates the biosynthesis of dolichol phosphate-mannose. Regulatory subunit of the dolichol-phosphate mannose (DPM) synthase complex; essential for the ER localization and stable expression of DPM1. Part of the glycosylphosphatidylinositol-N-acetylglucosaminyltransferase (GPI-GnT) complex that catalyzes the transfer of N-acetylglucosamine from UDP-N-acetylglucosamine to phosphatidylinositol and participates in the first step of GPI biosynthesis. May act by regulating the GPI-GNT complex. The chain is Dolichol phosphate-mannose biosynthesis regulatory protein from Cricetulus griseus (Chinese hamster).